The sequence spans 101 residues: uncharacterized protein (101 aa).

The chain crosses the membrane as a helical span at residues 70–90 (VLFIPIILLLPPSCPLTGVTV).

The protein localises to the membrane. This is an uncharacterized protein from Saccharomyces cerevisiae (strain ATCC 204508 / S288c) (Baker's yeast).